Here is a 255-residue protein sequence, read N- to C-terminus: tRNA (guanine-N(1)-)-methyltransferase (255 aa).

Residues Gly-113 and 133–138 contribute to the S-adenosyl-L-methionine site; that span reads IGDYVL.

The protein belongs to the RNA methyltransferase TrmD family. Homodimer.

The protein localises to the cytoplasm. It carries out the reaction guanosine(37) in tRNA + S-adenosyl-L-methionine = N(1)-methylguanosine(37) in tRNA + S-adenosyl-L-homocysteine + H(+). Specifically methylates guanosine-37 in various tRNAs. This chain is tRNA (guanine-N(1)-)-methyltransferase, found in Klebsiella pneumoniae (strain 342).